The sequence spans 195 residues: CASP-like protein 1B1 (195 aa).

The Cytoplasmic portion of the chain corresponds to 1 to 15 (MAKLALAATSGKSCK). A helical membrane pass occupies residues 16–36 (ILLGLRLLAFSATLSAAIVMG). Over 37 to 67 (LNKETETFVVGKVGNTPIKATFTAKFDHTPA) the chain is Extracellular. The chain crosses the membrane as a helical span at residues 68–88 (FVFFVVANAMVSFHNLLMIAL). Over 89 to 104 (QIFGGKMEFTGFRLLS) the chain is Cytoplasmic. Residues 105 to 125 (VAILDMLNVTLISAAANAAAF) traverse the membrane as a helical segment. At 126 to 154 (MAEVGKNGNKHARWDKICDRFATYCDHGA) the chain is on the extracellular side. Residues 155–175 (GALIAAFAGVILMLIISAASI) traverse the membrane as a helical segment. The Cytoplasmic segment spans residues 176-195 (SRLAQQNKCCSTTASPSVVP).

The protein belongs to the Casparian strip membrane proteins (CASP) family. In terms of assembly, homodimer and heterodimers.

The protein resides in the cell membrane. This chain is CASP-like protein 1B1, found in Arabidopsis lyrata subsp. lyrata (Lyre-leaved rock-cress).